A 369-amino-acid polypeptide reads, in one-letter code: CCA-adding enzyme (369 aa).

Residues G8 and R11 each contribute to the ATP site. CTP contacts are provided by G8 and R11. Residues D21 and D23 each coordinate Mg(2+). Positions 91, 137, and 140 each coordinate ATP. The CTP site is built by R91, R137, and R140.

Belongs to the tRNA nucleotidyltransferase/poly(A) polymerase family. Bacterial CCA-adding enzyme type 2 subfamily. Requires Mg(2+) as cofactor.

It catalyses the reaction a tRNA precursor + 2 CTP + ATP = a tRNA with a 3' CCA end + 3 diphosphate. The catalysed reaction is a tRNA with a 3' CCA end + 2 CTP + ATP = a tRNA with a 3' CCACCA end + 3 diphosphate. In terms of biological role, catalyzes the addition and repair of the essential 3'-terminal CCA sequence in tRNAs without using a nucleic acid template. Adds these three nucleotides in the order of C, C, and A to the tRNA nucleotide-73, using CTP and ATP as substrates and producing inorganic pyrophosphate. tRNA 3'-terminal CCA addition is required both for tRNA processing and repair. Also involved in tRNA surveillance by mediating tandem CCA addition to generate a CCACCA at the 3' terminus of unstable tRNAs. While stable tRNAs receive only 3'-terminal CCA, unstable tRNAs are marked with CCACCA and rapidly degraded. The polypeptide is CCA-adding enzyme (Francisella tularensis subsp. novicida (strain U112)).